The following is a 1093-amino-acid chain: Isomaltosyltransferase (1093 aa).

The N-terminal stretch at 1–29 (MYVRNLTGSFRFSLSFLLCFCLFVPSIYA) is a signal peptide. Asp566 acts as the Nucleophile in catalysis. The active site involves Glu569. Asp631 functions as the Proton donor in the catalytic mechanism. A CBM6 domain is found at 968–1091 (VEYEAEFGVQ…GINFDNIAIV (124 aa)).

Belongs to the glycosyl hydrolase 31 family.

The protein resides in the secreted. It catalyses the reaction 2 alpha-isomaltosyl-(1-&gt;4)-D-maltotriose = alpha-isomaltosyl-(1-&gt;3)-alpha-isomaltosyl-(1-&gt;4)-D-maltotriose + D-maltotriose. It carries out the reaction alpha-isomaltosyl-(1-&gt;3)-alpha-isomaltosyl-(1-&gt;4)-D-maltotriose = cyclobis-(1-&gt;3)-alpha-D-isomaltosyl + D-maltotriose. With respect to regulation, strongly inhibited by Hg(2+) and moderately inhibited by Cu(2+) and Pb(2+). Other metal ions, Tris and EDTA have almost no effects. In terms of biological role, glycosyltransferase involved, together with CtsZ, in the conversion of alpha-1,4-glucan into a cyclic tetrasaccharide (CTS) constructed from four alpha-glucopyranosyl residues. Catalyzes the alpha-(1-&gt;3) transfer of the isomaltosyl moiety of alpha-isomaltosyl-(1-&gt;4)-D-maltotriose to another alpha-isomaltosyl-(1-&gt;4)-D-maltotriose, resulting in alpha-isomaltosyl-(1-&gt;3)-alpha-isomaltosyl-alpha-(1-&gt;4)-maltotriose formation. In addition, the enzyme catalyzes the intramolecular cyclization of the product, generating the cyclic tetrasaccharide cyclobis-(1-&gt;6)-alpha-nigerosyl. This chain is Isomaltosyltransferase, found in Sporosarcina globispora (Bacillus globisporus).